We begin with the raw amino-acid sequence, 147 residues long: D-aminoacyl-tRNA deacylase (147 aa).

The Gly-cisPro motif, important for rejection of L-amino acids motif lies at 137–138 (GP).

This sequence belongs to the DTD family. Homodimer.

Its subcellular location is the cytoplasm. The enzyme catalyses glycyl-tRNA(Ala) + H2O = tRNA(Ala) + glycine + H(+). The catalysed reaction is a D-aminoacyl-tRNA + H2O = a tRNA + a D-alpha-amino acid + H(+). Functionally, an aminoacyl-tRNA editing enzyme that deacylates mischarged D-aminoacyl-tRNAs. Also deacylates mischarged glycyl-tRNA(Ala), protecting cells against glycine mischarging by AlaRS. Acts via tRNA-based rather than protein-based catalysis; rejects L-amino acids rather than detecting D-amino acids in the active site. By recycling D-aminoacyl-tRNA to D-amino acids and free tRNA molecules, this enzyme counteracts the toxicity associated with the formation of D-aminoacyl-tRNA entities in vivo and helps enforce protein L-homochirality. This Bacillus licheniformis (strain ATCC 14580 / DSM 13 / JCM 2505 / CCUG 7422 / NBRC 12200 / NCIMB 9375 / NCTC 10341 / NRRL NRS-1264 / Gibson 46) protein is D-aminoacyl-tRNA deacylase.